The chain runs to 139 residues: Acyl carrier protein 4, chloroplastic (139 aa).

Residues 1 to 55 (MASAAAGASICIKSASCSPLAPGRISSLRSVSLPVSRKSFPSLRSSKGSFARVSC) constitute a chloroplast transit peptide. Residues 59-134 (PETVAKVCRI…DAADLIEKLM (76 aa)) form the Carrier domain. S94 is modified (O-(pantetheine 4'-phosphoryl)serine).

This sequence belongs to the acyl carrier protein (ACP) family. 4'-phosphopantetheine is transferred from CoA to a specific serine of apo-ACP by acpS. This modification is essential for activity because fatty acids are bound in thioester linkage to the sulfhydryl of the prosthetic group.

It is found in the plastid. The protein localises to the chloroplast. The protein operates within lipid metabolism; fatty acid biosynthesis. Its function is as follows. Carrier of the growing fatty acid chain in fatty acid biosynthesis. This Cuphea lanceolata (Cigar flower) protein is Acyl carrier protein 4, chloroplastic (ACL1).